A 314-amino-acid polypeptide reads, in one-letter code: Olfactory receptor 9I1 (314 aa).

Over 1-25 (MAKNNLTRVTEFILMGFMDHPKLEI) the chain is Extracellular. An N-linked (GlcNAc...) asparagine glycan is attached at Asn5. The chain crosses the membrane as a helical span at residues 26–46 (PLFLVFLSFYLVTLLGNVGMI). The Cytoplasmic segment spans residues 47-54 (MLIQVDVK). A helical transmembrane segment spans residues 55 to 75 (LYTPMYFFLSHLSLLDACYTS). Residues 76-99 (VITPQILATLATGKTVISYGHCAA) lie on the Extracellular side of the membrane. Cysteines 97 and 189 form a disulfide. The chain crosses the membrane as a helical span at residues 100 to 120 (QFFLFTICAGTECFLLAVMAY). Residues 121–139 (DRYAAIRNPLLYTVAMNPR) are Cytoplasmic-facing. Residues 140 to 160 (LCWSLVVGAYVCGVSGAILRT) traverse the membrane as a helical segment. The Extracellular segment spans residues 161–197 (TCTFTLSFCKDNQINFFFCDLPPLLKLACSDTANIEI). Residues 198–217 (VIIFFGNFVILANASVILIS) traverse the membrane as a helical segment. The Cytoplasmic portion of the chain corresponds to 218-237 (YLLIIKTILKVKSSGGRAKT). Residues 238–258 (FSTCASHITAVALFFGALIFM) form a helical membrane-spanning segment. The Extracellular segment spans residues 259 to 271 (YLQSGSGKSLEED). The chain crosses the membrane as a helical span at residues 272–292 (KVVSVFYTVVIPMLNPLIYSL). Residues 293-314 (RNKDVKDAFRKVARRLQVSLSM) lie on the Cytoplasmic side of the membrane.

It belongs to the G-protein coupled receptor 1 family.

Its subcellular location is the cell membrane. Functionally, odorant receptor. The chain is Olfactory receptor 9I1 (OR9I1) from Homo sapiens (Human).